Here is a 417-residue protein sequence, read N- to C-terminus: Probable histone-binding protein lin-53 (417 aa).

WD repeat units lie at residues 118–158 (NHEG…AVPR), 170–210 (GHTK…NVAG), 220–260 (GHES…PGHC), 263–303 (AHSA…MKLH), 307–347 (SHRD…EDQS), and 364–404 (GHTA…YNEV).

This sequence belongs to the WD repeat RBAP46/RBAP48/MSI1 family. In terms of assembly, binds directly to helix 1 of the histone fold of histone H4, a region that is not accessible when H4 is in chromatin. Probable component of a NuRD-like complex, composed of at least lin-53 and hda-1. Interacts with lin-35. Interacts with hda-1; the interaction is direct. Component of the DRM complex, at least composed of lin-9, lin-35, lin-37, lin-52, lin-53, lin-54- dpl-1 and efl-1. Interacts with hcp-3.

Its subcellular location is the nucleus. It localises to the chromosome. It is found in the centromere. Its function is as follows. Core histone-binding subunit that may target chromatin assembly factors, chromatin remodeling factors and histone deacetylases to their histone substrates in a manner that is regulated by nucleosomal DNA. Required for hcp-3 and his-1 stabilization, localization of hcp-3 to centromeres and for proper chromosome segregation. Synthetic multivulva class B (synMuvB) protein. SynMuvB proteins are required to repress the induction of vulval development by Ras signaling and probably act by forming the multiprotein DRM complex that represses transcription. This is Probable histone-binding protein lin-53 from Caenorhabditis elegans.